We begin with the raw amino-acid sequence, 219 residues long: Auxin-responsive protein IAA24 (219 aa).

The EAR-like (transcriptional repression) signature appears at 24 to 28 (LCLRL). Disordered stretches follow at residues 24 to 88 (LCLR…AKAQ) and 109 to 128 (AAAA…QQGG). The span at 60 to 71 (STDSMASGTGTS) shows a compositional bias: polar residues. The PB1 domain occupies 129–215 (GLYVKVSMDG…SCKKLRIMKG (87 aa)).

This sequence belongs to the Aux/IAA family. Homodimers and heterodimers. In terms of tissue distribution, highly expressed in flowers. Expressed in seedlings.

Its subcellular location is the nucleus. Aux/IAA proteins are short-lived transcriptional factors that function as repressors of early auxin response genes at low auxin concentrations. The chain is Auxin-responsive protein IAA24 (IAA24) from Oryza sativa subsp. japonica (Rice).